The sequence spans 838 residues: V-type proton ATPase 116 kDa subunit a 1 (838 aa).

Over 1-388 the chain is Cytoplasmic; the sequence is MGELFRSEEM…DAYGIGTYRE (388 aa). Residues 389 to 407 traverse the membrane as a helical segment; that stretch reads INPAPYTIITFPFLFAVMF. Over 408–409 the chain is Vacuolar; that stretch reads GD. A helical transmembrane segment spans residues 410–426; sequence FGHGILMTLIAIWMVLR. Over 427 to 441 the chain is Cytoplasmic; it reads ESRILSQKSDNEMFS. A helical transmembrane segment spans residues 442-471; that stretch reads TVFSGRYIILLMGLFSTYTGLIYNDCFSKS. Residues 472–535 lie on the Vacuolar side of the membrane; sequence LNMFGSSWSV…ANNKLAFLNS (64 aa). The chain crosses the membrane as a helical span at residues 536–555; the sequence is FKMKMSVILGIIHMLFGVML. Over 556-573 the chain is Cytoplasmic; that stretch reads SLLNHIYFKKPLNIYLGF. The helical transmembrane segment at 574–594 threads the bilayer; the sequence is IPEMIFMSSLFGYLVILIFYK. At 595 to 639 the chain is on the vacuolar side; that stretch reads WTAYDAHTSKEAPSPLIHFINMFLFSYGDTSNKMLYRGQKGIQCF. Residues 640–659 traverse the membrane as a helical segment; sequence LVVVALLCVPWMLVAKPLVL. The Cytoplasmic segment spans residues 660-725; sequence RHQYLRRKHL…DTVVYQAIHT (66 aa). Residues 726–750 form a helical membrane-spanning segment; that stretch reads IEYCLGCISNTASYLRLWALSLAHA. Residues 751-771 lie on the Vacuolar side of the membrane; the sequence is QLSEVLWTMVIHTGLSVRSLA. A helical membrane pass occupies residues 772 to 810; sequence GGFGLVFIFAAFATLTVAILLVMEGLSAFLHALRLHWIE. At 811–838 the chain is on the cytoplasmic side; the sequence is FQNKFYTGTGFKFLPFSFDPIREGKFDD.

The protein belongs to the V-ATPase 116 kDa subunit family. V-ATPase is a heteromultimeric enzyme made up of two complexes: the ATP-hydrolytic V1 complex and the proton translocation V0 complex. The V1 complex consists of three catalytic AB heterodimers that form a heterohexamer, three peripheral stalks each consisting of EG heterodimers, one central rotor including subunits D and F, and the regulatory subunits C and H. The proton translocation complex V0 consists of the proton transport subunit a, a ring of proteolipid subunits c9c'', rotary subunit d, subunits e and f, and two accessory subunits. Detected in brain (at protein level). Highest expression in brain, intermediate levels in kidney, and relatively low levels in bone and liver.

Its subcellular location is the cytoplasmic vesicle. The protein localises to the clathrin-coated vesicle membrane. It localises to the secretory vesicle. The protein resides in the synaptic vesicle membrane. It is found in the melanosome. Functionally, subunit of the V0 complex of vacuolar(H+)-ATPase (V-ATPase), a multisubunit enzyme composed of a peripheral complex (V1) that hydrolyzes ATP and a membrane integral complex (V0) that translocates protons. V-ATPase is responsible for acidifying and maintaining the pH of intracellular compartments and in some cell types, is targeted to the plasma membrane, where it is responsible for acidifying the extracellular environment. Required for assembly and activity of the vacuolar ATPase. The protein is V-type proton ATPase 116 kDa subunit a 1 (ATP6V0A1) of Gallus gallus (Chicken).